A 142-amino-acid polypeptide reads, in one-letter code: MIHFILIQNRQGKTRLSKWYTPYEDVEKRKLSHEIHKIVNSRETKFTNFVEFRTHRIVYRRYAGLFFSVCVDPTDNELFCLEAIHLFVEVLDAYFGNVCELDLVFNFYKVYAIIDEVFLAGELMEPSKHVILQRMEFLDNLP.

It belongs to the adaptor complexes small subunit family. In terms of assembly, adaptor protein complex 2 (AP-2) is a heterotetramer composed of two large adaptins (alpha-type and beta-type subunits), a medium adaptin (mu-type subunit AP50) and a small adaptin (sigma-type subunit AP17).

The protein localises to the cell membrane. It localises to the membrane. Its subcellular location is the coated pit. Functionally, component of the adaptor complexes which link clathrin to receptors in coated vesicles. Clathrin-associated protein complexes are believed to interact with the cytoplasmic tails of membrane proteins, leading to their selection and concentration. This chain is AP-2 complex subunit sigma (ap2s1), found in Dictyostelium discoideum (Social amoeba).